A 133-amino-acid chain; its full sequence is Small ribosomal subunit protein bS18 (133 aa).

The tract at residues 1–63 is disordered; the sequence is MARPDMGGPK…GDEGGGRRGF (63 aa). Residues 9 to 39 show a composition bias toward gly residues; the sequence is PKTGGFGGPRSGGFGGGGGGGFGGGGFGGGR. Over residues 40-59 the composition is skewed to basic and acidic residues; it reads GGDRGDRGDRDDRGGDEGGG.

It belongs to the bacterial ribosomal protein bS18 family. In terms of assembly, part of the 30S ribosomal subunit. Forms a tight heterodimer with protein bS6.

In terms of biological role, binds as a heterodimer with protein bS6 to the central domain of the 16S rRNA, where it helps stabilize the platform of the 30S subunit. The sequence is that of Small ribosomal subunit protein bS18 from Anaeromyxobacter dehalogenans (strain 2CP-1 / ATCC BAA-258).